The following is a 99-amino-acid chain: MTSALTQGLERIPDQLGYLVLSEGAVLASSGDLENDEQAASAISELVSTACGFRLHQGMSVPFKRLSVVFGEHTLLVTVSGQRVFVVKRQNRGREPIDV.

Met1 is subject to N-acetylmethionine. At Thr2 the chain carries N-acetylthreonine; in Ragulator complex protein LAMTOR4, N-terminally processed. Ser67 is modified (phosphoserine).

The protein belongs to the LAMTOR4 family. As to quaternary structure, part of the Ragulator complex composed of LAMTOR1, LAMTOR2, LAMTOR3, LAMTOR4 and LAMTOR5. LAMTOR4 and LAMTOR5 form a heterodimer that interacts, through LAMTOR1, with a LAMTOR2, LAMTOR3 heterodimer. The Ragulator complex interacts with both the mTORC1 complex and heterodimers constituted of the Rag GTPases RagA/RRAGA, RagB/RRAGB, RagC/RRAGC and RagD/RRAGD; regulated by amino acid availability. The Ragulator complex interacts with SLC38A9; the probable amino acid sensor. Component of the lysosomal folliculin complex (LFC), composed of FLCN, FNIP1 (or FNIP2), RagA/RRAGA or RagB/RRAGB GDP-bound, RagC/RRAGC or RagD/RRAGD GTP-bound, and Ragulator. Phosphorylation at Ser-67 by PKA inhibits Ragulator complex assembly.

It is found in the lysosome. In terms of biological role, as part of the Ragulator complex it is involved in amino acid sensing and activation of mTORC1, a signaling complex promoting cell growth in response to growth factors, energy levels, and amino acids. Activated by amino acids through a mechanism involving the lysosomal V-ATPase, the Ragulator plays a dual role for the small GTPases Rag (RagA/RRAGA, RagB/RRAGB, RagC/RRAGC and/or RagD/RRAGD): it (1) acts as a guanine nucleotide exchange factor (GEF), activating the small GTPases Rag and (2) mediates recruitment of Rag GTPases to the lysosome membrane. Activated Ragulator and Rag GTPases function as a scaffold recruiting mTORC1 to lysosomes where it is in turn activated. The polypeptide is Ragulator complex protein LAMTOR4 (LAMTOR4) (Bos taurus (Bovine)).